We begin with the raw amino-acid sequence, 192 residues long: GTP cyclohydrolase-2 (192 aa).

A GTP-binding site is contributed by 50 to 54 (RLHSE). Zn(2+) contacts are provided by Cys55, Cys66, and Cys68. GTP is bound by residues 92–94 (EGR) and Thr114. The active-site Proton acceptor is the Asp126. Arg128 functions as the Nucleophile in the catalytic mechanism. The GTP site is built by Thr149 and Lys154.

This sequence belongs to the GTP cyclohydrolase II family. It depends on Zn(2+) as a cofactor.

It catalyses the reaction GTP + 4 H2O = 2,5-diamino-6-hydroxy-4-(5-phosphoribosylamino)-pyrimidine + formate + 2 phosphate + 3 H(+). Its pathway is cofactor biosynthesis; riboflavin biosynthesis; 5-amino-6-(D-ribitylamino)uracil from GTP: step 1/4. In terms of biological role, catalyzes the conversion of GTP to 2,5-diamino-6-ribosylamino-4(3H)-pyrimidinone 5'-phosphate (DARP), formate and pyrophosphate. This chain is GTP cyclohydrolase-2, found in Helicobacter pylori (strain Shi470).